Reading from the N-terminus, the 23-residue chain is Unknown protein 1 (23 aa).

The protein is Unknown protein 1 of Coniferiporia sulphurascens (Laminated root rot fungus).